We begin with the raw amino-acid sequence, 775 residues long: Thiamine repressible genes regulatory protein thi1 (775 aa).

Positions 39–65 (CKHCRQKKIKCNGGQPCISCKTLNIEC) form a DNA-binding region, zn(2)-C6 fungal-type. Ser208 carries the post-translational modification Phosphoserine. Disordered regions lie at residues 676–695 (LTGE…FQPF) and 754–775 (NVSE…EKNG).

Its subcellular location is the nucleus. Transcription factor that activates the nmt1 promoter. Regulation of thiamine repressible genes. Positively regulates conjugation during meiosis. This chain is Thiamine repressible genes regulatory protein thi1 (thi1), found in Schizosaccharomyces pombe (strain 972 / ATCC 24843) (Fission yeast).